Consider the following 783-residue polypeptide: Aconitate hydratase, mitochondrial (783 aa).

A mitochondrion-targeting transit peptide spans 1 to 25; sequence MITTRLARMGALAPKSRLLFGTRGM. Residues Gln102 and 195–197 contribute to the substrate site; that span reads DSH. Cys388, Cys451, and Cys454 together coordinate [4Fe-4S] cluster. Substrate is bound by residues Arg477 and Arg482. The tract at residues 524–555 is disordered; it reads EFKLKAPTGDGLPSRGYDPGRDTYQAPPTDRS. Residues Arg610 and 673-674 contribute to the substrate site; that span reads SR.

It belongs to the aconitase/IPM isomerase family. It depends on [4Fe-4S] cluster as a cofactor.

Its subcellular location is the mitochondrion. It carries out the reaction citrate = D-threo-isocitrate. The catalysed reaction is (2R)-homocitrate = cis-homoaconitate + H2O. It functions in the pathway carbohydrate metabolism; tricarboxylic acid cycle; isocitrate from oxaloacetate: step 2/2. It participates in amino-acid biosynthesis; L-lysine biosynthesis via AAA pathway; L-alpha-aminoadipate from 2-oxoglutarate: step 2/5. Functionally, catalyzes the isomerization of citrate to isocitrate via cis-aconitate, a step in the citric acid cycle. Also catalyzes the reversible dehydration of (R)-homocitrate to cis-homoaconitate, a step in the alpha-aminoadipate pathway for lysine biosynthesis. This chain is Aconitate hydratase, mitochondrial (acoA), found in Emericella nidulans (strain FGSC A4 / ATCC 38163 / CBS 112.46 / NRRL 194 / M139) (Aspergillus nidulans).